The sequence spans 1247 residues: MEFIPAQTYYNRRYQPRPWTQRPTIQVIRPKPRRRRPAGQLAQLISAVSRLALRTVPQKPRRTRKIKKQKQVKQEQQSTRNQKKKAPKQKQTQKKKRPGRRERMCMKIENDCIFEVKHEGKVTGYACLVGDKVMKPAHVKGTIDNADLAKLAFKRSSKYDLECAQIPVHMKSDASKFTHEKPEGYYNWHHGAVQYSGGRFTIPTGAGKPGDSGRPIFDNKGRVVAIVLGGANEGTRTALSVVTWNKDIVTKITPEGSVEWSLALPVMCLLANTTFPCSQPPCAPCCYEKKPEETLRMLEDNVMQPGYYQLLDSALACSQHRQRRNARENFNVYKVTRPYLAHCPDCGEGHSCHSPIALERIRSEATDGTLKIQVSLQIGIKTADSHDWTKLRYMDSHTPVDADRSGLFVRTSAPCTITGTMGHFILARCPKGETLTVGFVDSRRISHTCMHPFHHEPPLIGREKFHSRPQHGKELPCSTYVHTTAATTEEIEVHMPPDTPDYTLMTQQAGNVKITVDGQTVRYKCKCDGSNEGLITTDKVINNCKVDQCHTAVTNHKKWQYNSPLTPRNSEQGDRKGKIHIPFPLVNTTCRVPKARNPTVTYGKNRVTLLLYPDHPTLLSYRAMGRIPDYHEEWITSKKEISITVPAEGLEVTWGNNDPYKYWPQLSTNGTAHGHPHEIILYYYELYPTTTIAVLAAASIVVASLVGLSLGMCICARRRCITPYELTPGATIPFLLGILCCVKTAKAASYYEAATYLWNEQQPLFWLQLLIPLSAAIVVCNCLKLLPCCCKTLTFLAVMSIGARTVSAYEHATVIPNTVGVPYKTLVSRPGYSPMVLEMELQSVTLEPTLFLDYITCEYKTITPSPYVKCCGTAECKAKNLPDYNCKVFTGVYPFMWGGAYCFCDAENTQLSEAHVEKSESCKTEFASAYRAHTASVSAKLRVFYQGNNITVSAYANGDHAVTVKDAKFVIGPLSSAWSPFDNKIVVYKGEVYNMDYPPFGAGRPGQFGDIQSRTPDSKDVYANTQLILQRPAAGAIHVPYSQAPSGFKYWLKEKGASLQHTAPFGCQIATNPVRAVNCAVGNIPVSIDIPDAAFTRVTDAPSVTDMSCEVASCTHSSDFGGAAVIKYTASKKGKCAVHSLTNAVTIREPNVDVEGTAQLQIAFSTALASAEFKVQICSTQVHCSATCHPPKDHIVNYPSPHTTLGVQDISTTAMSWVQKITGGVGLVVAIAALILIIVLCVSFSRH.

The segment at 36–67 is host transcription inhibition; it reads RPAGQLAQLISAVSRLALRTVPQKPRRTRKIK. A disordered region spans residues 53–103; sequence LRTVPQKPRRTRKIKKQKQVKQEQQSTRNQKKKAPKQKQTQKKKRPGRRER. Composition is skewed to basic residues over residues 59–71 and 81–100; these read KPRRTRKIKKQKQ and NQKKKAPKQKQTQKKKRPGR. Positions 60-98 match the Nuclear localization signal motif; sequence PRRTRKIKKQKQVKQEQQSTRNQKKKAPKQKQTQKKKRP. Positions 83–113 are binding to the viral RNA; the sequence is KKKAPKQKQTQKKKRPGRRERMCMKIENDCI. The interval 98–112 is ribosome-binding; it reads PGRRERMCMKIENDC. Residues cysteine 112 and cysteine 127 are joined by a disulfide bond. In terms of domain architecture, Peptidase S3 spans 112–260; it reads CIFEVKHEGK…KITPEGSVEW (149 aa). Catalysis depends on histidine 138, which acts as the Charge relay system. The Nuclear export signal motif lies at 143 to 153; sequence IDNADLAKLAF. An interaction with spike glycoprotein E2 region spans residues 154–159; sequence KRSSKY. The active-site Charge relay system is aspartate 160. The segment at 182-192 is dimerization of the capsid protein; the sequence is PEGYYNWHHGA. The active-site Charge relay system is the serine 212. The segment at 218 to 222 is dimerization of the capsid protein; the sequence is DNKGR. The interval 261–273 is functions as an uncleaved signal peptide for the precursor of protein E3/E2; sequence SLALPVMCLLANT. 9 disulfides stabilise this stretch: cysteine 268–cysteine 277, cysteine 282–cysteine 286, cysteine 285–cysteine 317, cysteine 343–cysteine 449, cysteine 346–cysteine 352, cysteine 415–cysteine 429, cysteine 477–cysteine 590, cysteine 525–cysteine 549, and cysteine 527–cysteine 544. N-linked (GlcNAc...) asparagine; by host glycosylation occurs at asparagine 272. Residues 325 to 691 are Extracellular-facing; the sequence is NARENFNVYK…YYYELYPTTT (367 aa). The N-linked (GlcNAc...) asparagine; by host glycan is linked to asparagine 587. A helical membrane pass occupies residues 692 to 712; sequence IAVLAAASIVVASLVGLSLGM. At 713-747 the chain is on the cytoplasmic side; it reads CICARRRCITPYELTPGATIPFLLGILCCVKTAKA. Positions 715 to 719 are interaction with the capsid protein; it reads CARRR. S-palmitoyl cysteine; by host attachment occurs at residues cysteine 720, cysteine 740, and cysteine 741. The transient transmembrane before p62-6K protein processing stretch occupies residues 720–740; the sequence is CITPYELTPGATIPFLLGILC. Residues cysteine 720 and cysteine 741 are joined by a disulfide bond. Over 748-762 the chain is Extracellular; it reads ASYYEAATYLWNEQQ. A helical membrane pass occupies residues 763-783; the sequence is PLFWLQLLIPLSAAIVVCNCL. The Cytoplasmic segment spans residues 784–787; sequence KLLP. The chain crosses the membrane as a helical span at residues 788-808; the sequence is CCCKTLTFLAVMSIGARTVSA. The Extracellular segment spans residues 809-1223; that stretch reads YEHATVIPNT…AMSWVQKITG (415 aa). Cystine bridges form between cysteine 857–cysteine 922, cysteine 870–cysteine 902, cysteine 871–cysteine 904, and cysteine 876–cysteine 886. The interval 892–909 is E1 fusion peptide loop; that stretch reads VYPFMWGGAYCFCDAENT. N-linked (GlcNAc...) asparagine; by host glycosylation is found at asparagine 949 and asparagine 1078. 4 cysteine pairs are disulfide-bonded: cysteine 1067–cysteine 1079, cysteine 1109–cysteine 1184, cysteine 1114–cysteine 1188, and cysteine 1136–cysteine 1178. A helical membrane pass occupies residues 1224-1244; that stretch reads GVGLVVAIAALILIIVLCVSF. The S-palmitoyl cysteine; by host moiety is linked to residue cysteine 1241. The Cytoplasmic portion of the chain corresponds to 1245 to 1247; the sequence is SRH.

As to quaternary structure, homodimer. Homomultimer. Interacts with host karyopherin KPNA4; this interaction allows the nuclear import of the viral capsid protein. Interacts with spike glycoprotein E2. Interacts with host IRAK1; the interaction leads to inhibition of IRAK1-dependent signaling. In terms of assembly, the precursor of protein E3/E2 and E1 form a heterodimer shortly after synthesis. The precursor of protein E3/E2 and E1 form a heterodimer shortly after synthesis. Processing of the precursor of protein E3/E2 into E2 and E3 results in a heterodimer of the spike glycoproteins E2 and E1. Spike at virion surface are constituted of three E2-E1 heterodimers. After target cell attachment and endocytosis, E1 change conformation to form homotrimers. Interacts with 6K protein. As to quaternary structure, interacts with spike glycoprotein E1. Processing of the precursor of protein E3/E2 into E2 and E3 results in a heterodimer of the spike glycoproteins E2 and E1. Spike at virion surface are constituted of a trimer of E2-E1 heterodimers. Interacts with 6K protein. Interacts with host MXRA8; this interaction mediates virus entry. In terms of assembly, oligomer. Interacts with spike glycoprotein E1. Interacts with spike glycoprotein E2. In terms of processing, structural polyprotein: Specific enzymatic cleavages in vivo yield mature proteins. Capsid protein is auto-cleaved during polyprotein translation, unmasking a signal peptide at the N-terminus of the precursor of E3/E2. The remaining polyprotein is then targeted to the host endoplasmic reticulum, where host signal peptidase cleaves it into pE2, 6K and E1 proteins. pE2 is further processed to mature E3 and E2 by host furin in trans-Golgi vesicle. Palmitoylated via thioester bonds. These palmitoylations may induce disruption of the C-terminus transmembrane. This would result in the reorientation of E2 C-terminus from lumenal to cytoplasmic side. Post-translationally, N-glycosylated. In terms of processing, palmitoylated via thioester bonds.

The protein localises to the virion. It localises to the host cytoplasm. The protein resides in the host cell membrane. Its subcellular location is the host nucleus. It is found in the virion membrane. The protein localises to the host Golgi apparatus. It localises to the host trans-Golgi network. The protein resides in the host endoplasmic reticulum. It carries out the reaction Autocatalytic release of the core protein from the N-terminus of the togavirus structural polyprotein by hydrolysis of a -Trp-|-Ser- bond.. Forms an icosahedral capsid with a T=4 symmetry composed of 240 copies of the capsid protein surrounded by a lipid membrane through which penetrate 80 spikes composed of trimers of E1-E2 heterodimers. The capsid protein binds to the viral RNA genome at a site adjacent to a ribosome binding site for viral genome translation following genome release. Possesses a protease activity that results in its autocatalytic cleavage from the nascent structural protein. Following its self-cleavage, the capsid protein transiently associates with ribosomes, and within several minutes the protein binds to viral RNA and rapidly assembles into icosahedric core particles. The resulting nucleocapsid eventually associates with the cytoplasmic domain of the spike glycoprotein E2 at the cell membrane, leading to budding and formation of mature virions. In case of infection, new virions attach to target cells and after clathrin-mediated endocytosis their membrane fuses with the host endosomal membrane. This leads to the release of the nucleocapsid into the cytoplasm, followed by an uncoating event necessary for the genomic RNA to become accessible. The uncoating might be triggered by the interaction of capsid proteins with ribosomes. Binding of ribosomes would release the genomic RNA since the same region is genomic RNA-binding and ribosome-binding. Specifically inhibits interleukin-1 receptor-associated kinase 1/IRAK1-dependent signaling during viral entry, representing a means by which the alphaviruses may evade innate immune detection and activation prior to viral gene expression. In terms of biological role, provides the signal sequence for the translocation of the precursor of protein E3/E2 to the host endoplasmic reticulum. Furin-cleaved E3 remains associated with spike glycoprotein E1 and mediates pH protection of the latter during the transport via the secretory pathway. After virion release from the host cell, the assembly protein E3 is gradually released in the extracellular space. Functionally, plays a role in viral attachment to target host cell, by binding to the cell receptor MXRA8. Synthesized as a p62 precursor which is processed by furin at the cell membrane just before virion budding, giving rise to E2-E1 heterodimer. The p62-E1 heterodimer is stable, whereas E2-E1 is unstable and dissociate at low pH. p62 is processed at the last step, presumably to avoid E1 fusion activation before its final export to cell surface. E2 C-terminus contains a transitory transmembrane that would be disrupted by palmitoylation, resulting in reorientation of the C-terminal tail from lumenal to cytoplasmic side. This step is critical since E2 C-terminus is involved in budding by interacting with capsid proteins. This release of E2 C-terminus in cytoplasm occurs lately in protein export, and precludes premature assembly of particles at the endoplasmic reticulum membrane. Its function is as follows. Acts as a viroporin that participates in virus glycoprotein processing and transport to the plasma membrane, cell permeabilization and budding of viral particles. Disrupts the calcium homeostasis of the cell, probably at the endoplasmic reticulum level. This leads to cytoplasmic calcium elevation. Because of its lipophilic properties, the 6K protein is postulated to influence the selection of lipids that interact with the transmembrane domains of the glycoproteins, which, in turn, affects the deformability of the bilayer required for the extreme curvature that occurs as budding proceeds. Present in low amount in virions, about 3% compared to viral glycoproteins. Class II viral fusion protein. Fusion activity is inactive as long as E1 is bound to E2 in mature virion. After virus attachment to target cell via host MXRA8 and endocytosis, acidification of the endosome induce dissociation of E1/E2 heterodimer and concomitant trimerization of the E1 subunits. This E1 trimer is fusion active, and promotes release of viral nucleocapsid in cytoplasm after endosome and viral membrane fusion. Efficient fusion requires the presence of cholesterol and sphingolipid in the target membrane. This Anopheles (Human) protein is Structural polyprotein.